Reading from the N-terminus, the 551-residue chain is Palmdelphin (551 aa).

Methionine 1 carries the N-acetylmethionine modification. A coiled-coil region spans residues 2–106 (EEAELVKERL…LQISTNEEAI (105 aa)). Lysine 125 is covalently cross-linked (Glycyl lysine isopeptide (Lys-Gly) (interchain with G-Cter in SUMO2)). Position 135 is a phosphoserine (serine 135). Lysine 179 is covalently cross-linked (Glycyl lysine isopeptide (Lys-Gly) (interchain with G-Cter in SUMO1); alternate). Residue lysine 179 forms a Glycyl lysine isopeptide (Lys-Gly) (interchain with G-Cter in SUMO2); alternate linkage. A compositionally biased stretch (basic and acidic residues) spans 247–259 (SERNSKSPTEYHD). Disordered regions lie at residues 247 to 393 (SERN…EDEE) and 450 to 529 (EEEE…IAGD). Position 271 is a phosphothreonine (threonine 271). Phosphoserine occurs at positions 321, 370, 384, and 385. A compositionally biased stretch (basic and acidic residues) spans 484 to 495 (KRAEVNPHENTN). Residues serine 498, serine 515, and serine 520 each carry the phosphoserine modification.

It belongs to the paralemmin family. Interacts with GLUL. Cell projection, dendrite. Cell projection, dendritic spine. Post-translationally, phosphorylated.

Its subcellular location is the cytoplasm. The protein localises to the cell projection. It localises to the dendrite. It is found in the dendritic spine. The sequence is that of Palmdelphin (PALMD) from Sus scrofa (Pig).